Reading from the N-terminus, the 171-residue chain is Anthrone oxygenase dmxR16 (171 aa).

A run of 3 helical transmembrane segments spans residues Val21 to Ile41, Gly67 to Leu87, and Tyr96 to Pro116. Asn118 and Asn129 each carry an N-linked (GlcNAc...) asparagine glycan. Residues Trp145–Ile165 form a helical membrane-spanning segment.

It belongs to the anthrone oxygenase family.

It localises to the membrane. It catalyses the reaction emodin anthrone + O2 = emodin + H2O + H(+). It participates in secondary metabolite biosynthesis. Anthrone oxygenase; part of the gene cluster that mediates the biosynthesis of the dimeric xanthones cryptosporioptides. The pathway begins with the synthesis of atrochrysone thioester by the polyketide synthase dmx-nrPKS. The atrochrysone carboxyl ACP thioesterase dmxR1 then breaks the thioester bond and releases the atrochrysone carboxylic acid from dmx-nrPKS. Atrochrysone carboxylic acid is decarboxylated by the decarboxylase dmxR15, and oxidized by the anthrone oxygenase dmxR16 to yield emodin. Emodin is then reduced to emodin hydroquinone by the oxidoreductase dmxR7. A-ring reduction by the short chain dehydrogenase dmxR18, dehydration by the scytalone dehydratase-like protein dmxR17 and probable spontaneous re-oxidation, results in overall deoxygenation to chrysophanol. Baeyer-Villiger oxidation by the Baeyer-Villiger monooxygenase (BVMO) dmxR6 then yields monodictylactone in equilibrium with monodictyphenone. In the case of the cryptosporioptides biosynthesis, monodictylactone is reduced at C-12 to an alcohol (by the short chain dehydrogenases dmxR12 or dmxR8) and hydroxylated at C-5 by dmxR9, yielding the electron-rich aromatic which could eliminate H(2)O to form the ortho-quinonemethide, followed by tautomerisation to paraquinone and complete the formal reduction to produce the 10-methylgroup. Conjugate addition of C-4a-OH to the resulting paraquinone by the monooxygenase dmxR10 then gives cyclohexadienone, which is then reduced at C-5 by the short chain dehydrogenase dmxR3 to give the dihydroxanthone. The 6,7-epoxide in the cryptosporioptides could be introduced by the cytochrome P450 monooxygenase dmxL3. The highly reducing PKS dmxL2 manufactures butyrate, which is further carboxylated by dmxL1 to form ethylmalonate. It is not yet clear whether the carboxylation occurs while the butyrate is attached to the ACP of dmxL2, but this unusual fungal metabolite could then be esterified to O-5 by the O-acetyltransferase dmxR13. Finally, dimerization performed by dmxR5 gives the observed dimers cryptosporioptides A, B and C as the final products of the pathway. This Cryptosporiopsis sp. (strain 8999) protein is Anthrone oxygenase dmxR16.